A 543-amino-acid chain; its full sequence is Putative cysteine ligase BshC (543 aa).

Residues 419–440 (DEKNNDNIDEVVEEVKAQISDI) are a coiled coil.

It belongs to the BshC family.

Its function is as follows. Involved in bacillithiol (BSH) biosynthesis. May catalyze the last step of the pathway, the addition of cysteine to glucosamine malate (GlcN-Mal) to generate BSH. This Oceanobacillus iheyensis (strain DSM 14371 / CIP 107618 / JCM 11309 / KCTC 3954 / HTE831) protein is Putative cysteine ligase BshC.